The following is a 141-amino-acid chain: uncharacterized protein (141 aa).

2 helical membrane-spanning segments follow: residues 41 to 61 and 95 to 115; these read LIML…NYLF and IIFL…SGFF.

The protein localises to the cell membrane. This is an uncharacterized protein from Rickettsia prowazekii (strain Madrid E).